The sequence spans 89 residues: Small ribosomal subunit protein uS15 (89 aa).

Belongs to the universal ribosomal protein uS15 family. In terms of assembly, part of the 30S ribosomal subunit. Forms a bridge to the 50S subunit in the 70S ribosome, contacting the 23S rRNA.

Its function is as follows. One of the primary rRNA binding proteins, it binds directly to 16S rRNA where it helps nucleate assembly of the platform of the 30S subunit by binding and bridging several RNA helices of the 16S rRNA. Functionally, forms an intersubunit bridge (bridge B4) with the 23S rRNA of the 50S subunit in the ribosome. The chain is Small ribosomal subunit protein uS15 from Methylococcus capsulatus (strain ATCC 33009 / NCIMB 11132 / Bath).